Here is a 267-residue protein sequence, read N- to C-terminus: Corrinoid adenosyltransferase EutT (267 aa).

Positions 80 and 83 each coordinate a divalent metal cation.

The protein belongs to the Cob(I)alamin adenosyltransferase family. EutT subfamily. As to quaternary structure, homodimer. A divalent metal cation is required as a cofactor.

It localises to the bacterial microcompartment. The catalysed reaction is 2 cob(II)alamin + reduced [electron-transfer flavoprotein] + 2 ATP + 2 H2O = 2 adenosylcob(III)alamin + oxidized [electron-transfer flavoprotein] + 2 phosphate + 2 diphosphate + 3 H(+). The enzyme catalyses 2 cob(II)inamide + reduced [electron-transfer flavoprotein] + 2 ATP + 2 H2O = 2 adenosylcob(III)inamide + oxidized [electron-transfer flavoprotein] + 2 phosphate + 2 diphosphate + 3 H(+). It participates in amine and polyamine degradation; ethanolamine degradation. Converts cyanocobalamin (CN-B12) to adenosylcobalamin (AdoCbl), the inducer of the eut operon. Is not active on cobinamide nor other intermediates in the adenosylcobalamin synthetic pathway. Allows full induction of the eut operon. Can use ADP, CTP and dATP in place of ATP, and cobinamide in place of cobalamin, none are as efficiently used as ATP and cobalamin. In terms of biological role, expression of the eut operon allows this bacteria to use ethanolamine (EA) as a carbon, nitrogen and energy source. It relies on cobalamin (vitamin B12) both as a cofactor for the ethanolamine ammonia-lyase (EAL) activity and to induce the operon. EA enhances bacterial survival in macrophages in a concentration-dependent manner, suggesting it is an important nutrient during infection. The protein is Corrinoid adenosyltransferase EutT of Salmonella typhimurium (strain LT2 / SGSC1412 / ATCC 700720).